The primary structure comprises 288 residues: Structure-specific endonuclease subunit SLX1 (288 aa).

In terms of domain architecture, GIY-YIG spans 10 to 93 (DFYCSYLLRS…QHSYKTRFIE (84 aa)). The segment at 209-265 (CMICDKKIDYIHDEGTQMVGFCSDDECDFLSCLSCLYKEFTKNSKQIIPKSGHCPNC) adopts an SLX1-type zinc-finger fold.

Belongs to the SLX1 family. Forms a heterodimer with SLX4. It depends on a divalent metal cation as a cofactor.

Its subcellular location is the nucleus. Catalytic subunit of the SLX1-SLX4 structure-specific endonuclease that resolves DNA secondary structures generated during DNA repair and recombination. Has endonuclease activity towards branched DNA substrates, introducing single-strand cuts in duplex DNA close to junctions with ss-DNA. In Kluyveromyces lactis (strain ATCC 8585 / CBS 2359 / DSM 70799 / NBRC 1267 / NRRL Y-1140 / WM37) (Yeast), this protein is Structure-specific endonuclease subunit SLX1.